Reading from the N-terminus, the 211-residue chain is MTHRRTKLFMMAAVVSYVMTSCGAVPINDLLDRASQRSDQLHSLSTTLSQELDSHFPPIGRVIMPRPSMCHTSALQTPNDKTQALQVSESELLSLARSLLQAWADPLSALSSSAFSLPHPAQSSIFNKVREMQEHSKNLGDGLDILSGKMGEAAQALSSLPFRGNDVGQDRISKLINFHFLLSCFRRDSHKIDSFLKVLRCRAANTQPEMC.

The first 24 residues, 1-24 (MTHRRTKLFMMAAVVSYVMTSCGA), serve as a signal peptide directing secretion. 2 disulfides stabilise this stretch: cysteine 70-cysteine 184 and cysteine 201-cysteine 211.

It belongs to the somatotropin/prolactin family.

It localises to the secreted. The polypeptide is Prolactin (prl) (Paralichthys olivaceus (Bastard halibut)).